The following is a 236-amino-acid chain: Uridylate kinase (236 aa).

10–13 lines the ATP pocket; the sequence is KLSG. Gly-52 contributes to the UMP binding site. ATP is bound by residues Gly-53 and Arg-57. UMP contacts are provided by residues Asp-72 and 133-140; that span reads TGNPFFTT. Thr-160, Tyr-166, and Asp-169 together coordinate ATP.

This sequence belongs to the UMP kinase family. In terms of assembly, homohexamer.

The protein resides in the cytoplasm. It carries out the reaction UMP + ATP = UDP + ADP. It functions in the pathway pyrimidine metabolism; CTP biosynthesis via de novo pathway; UDP from UMP (UMPK route): step 1/1. With respect to regulation, inhibited by UTP. In terms of biological role, catalyzes the reversible phosphorylation of UMP to UDP. This chain is Uridylate kinase, found in Cupriavidus pinatubonensis (strain JMP 134 / LMG 1197) (Cupriavidus necator (strain JMP 134)).